We begin with the raw amino-acid sequence, 429 residues long: Palmitoyltransferase SWF1 (429 aa).

Over 1–3 (MGT) the chain is Lumenal. A helical membrane pass occupies residues 4-24 (IAIIAAVILGISFMTFVAFFG). Topologically, residues 25–79 (RLPALRNTPISFLHRLIWIHLPNGILTVDRTLTNGRLTTSLTRLGRHLWYDQHPT) are cytoplasmic. A helical membrane pass occupies residues 80 to 100 (ILIFFFLLLSVGEYLYLPVAW). Residues 101–112 (PHFSFTHKFFGT) lie on the Lumenal side of the membrane. The chain crosses the membrane as a helical span at residues 113-133 (IAILCPYIFLYLSAYTDPGVI). Topologically, residues 134–201 (NAKTHVREMA…CVGANNQRWF (68 aa)) are cytoplasmic. Positions 156 to 206 (TSCETCHLLKPARSKHCSICKKCVGRMDHHCIFINNCVGANNQRWFILLLL) constitute a DHHC domain. The chain crosses the membrane as a helical span at residues 202–222 (ILLLLSTAILTLYGGVLGLVI). The Lumenal portion of the chain corresponds to 223 to 274 (IRAKIQARFPYWTLMPWWTSTQAWNSGDLDFHRWLLLWSWGLQSGVAMGGVT). The chain crosses the membrane as a helical span at residues 275-295 (LLALLTTPLVWGLLGYHLWLV). Over 296 to 429 (YCGTTTNESM…ERGRNRRRSS (134 aa)) the chain is Cytoplasmic. Basic and acidic residues predominate over residues 408–421 (GRSPVDEREFGRER). Residues 408-429 (GRSPVDEREFGRERGRNRRRSS) are disordered.

The protein belongs to the DHHC palmitoyltransferase family. SWF1 subfamily.

It is found in the endoplasmic reticulum membrane. The catalysed reaction is L-cysteinyl-[protein] + hexadecanoyl-CoA = S-hexadecanoyl-L-cysteinyl-[protein] + CoA. In terms of biological role, palmitoyltransferase that targets several endosomal SNAREs. Palmitoylates the SNAREs at cysteine residues close to the cytoplasmic end of their transmembrane domain. May have a role in the cellular quality control of transmembrane domain-containing proteins. The sequence is that of Palmitoyltransferase SWF1 (swf-1) from Neurospora crassa (strain ATCC 24698 / 74-OR23-1A / CBS 708.71 / DSM 1257 / FGSC 987).